The primary structure comprises 412 residues: uncharacterized protein (412 aa).

Residues 6-64 (ELAKGDIISVEVLRPAHGGEGIGHHDGRVIFVKGGIPGDVVDVEIAQLKKKWARGEVVK) enclose the TRAM domain. Glutamine 242, tyrosine 278, glutamate 300, and aspartate 341 together coordinate S-adenosyl-L-methionine. Cysteine 368 serves as the catalytic Nucleophile.

It belongs to the class I-like SAM-binding methyltransferase superfamily. RNA M5U methyltransferase family.

This is an uncharacterized protein from Corynebacterium glutamicum (strain ATCC 13032 / DSM 20300 / JCM 1318 / BCRC 11384 / CCUG 27702 / LMG 3730 / NBRC 12168 / NCIMB 10025 / NRRL B-2784 / 534).